Consider the following 191-residue polypeptide: Calcium-activated potassium channel subunit beta-1 (191 aa).

Residues 1-18 are Cytoplasmic-facing; it reads MGKKLVMAQKRGETRALC. A helical transmembrane segment spans residues 19 to 39; the sequence is LGVAMVVCAAITYYILGTTVL. Residues 40-155 are Extracellular-facing; that stretch reads PLYQKSVWTQ…VVYQRLYGPQ (116 aa). 2 N-linked (GlcNAc...) asparagine glycosylation sites follow: N80 and N142. A helical transmembrane segment spans residues 156 to 176; that stretch reads ILLFSFFWPTFLLTGGLLIIA. The Cytoplasmic portion of the chain corresponds to 177 to 191; the sequence is MVKLNRSLSVLAAQK.

It belongs to the KCNMB (TC 8.A.14.1) family. KCNMB1 subfamily. In terms of assembly, interacts with KCNMA1 tetramer. There are probably 4 molecules of KCMNB1 per KCNMA1 tetramer. N-glycosylated. In terms of tissue distribution, weakly expressed. In brain, it is expressed in a few discrete populations of neurons that also express KCNMA1.

The protein localises to the membrane. Its function is as follows. Regulatory subunit of the calcium activated potassium KCNMA1 (maxiK) channel. Modulates the calcium sensitivity and gating kinetics of KCNMA1, thereby contributing to KCNMA1 channel diversity. Increases the apparent Ca(2+)/voltage sensitivity of the KCNMA1 channel. It also modifies KCNMA1 channel kinetics and alters its pharmacological properties. It slows down the activation and the deactivation kinetics of the channel. Acts as a negative regulator of smooth muscle contraction by enhancing the calcium sensitivity to KCNMA1. Its presence is also a requirement for internal binding of the KCNMA1 channel opener dehydrosoyasaponin I (DHS-1) triterpene glycoside and for external binding of the agonist hormone 17-beta-estradiol (E2). Increases the binding activity of charybdotoxin (CTX) toxin to KCNMA1 peptide blocker by increasing the CTX association rate and decreasing the dissociation rate. This chain is Calcium-activated potassium channel subunit beta-1 (Kcnmb1), found in Rattus norvegicus (Rat).